Here is a 228-residue protein sequence, read N- to C-terminus: UPF0173 metal-dependent hydrolase Tpen_1493 (228 aa).

Belongs to the UPF0173 family.

The sequence is that of UPF0173 metal-dependent hydrolase Tpen_1493 from Thermofilum pendens (strain DSM 2475 / Hrk 5).